Here is a 241-residue protein sequence, read N- to C-terminus: Probable xyloglucan-specific endo-beta-1,4-glucanase A (241 aa).

The N-terminal stretch at methionine 1–alanine 15 is a signal peptide. N-linked (GlcNAc...) asparagine glycosylation is present at asparagine 47.

It belongs to the glycosyl hydrolase 12 (cellulase H) family.

Its subcellular location is the secreted. It carries out the reaction xyloglucan + H2O = xyloglucan oligosaccharides.. Catalyzes endohydrolysis of 1,4-beta-D-glucosidic linkages in xyloglucan with retention of the beta-configuration of the glycosyl residues. Specific for xyloglucan and does not hydrolyze other cell wall components. This Aspergillus niger (strain ATCC MYA-4892 / CBS 513.88 / FGSC A1513) protein is Probable xyloglucan-specific endo-beta-1,4-glucanase A (xgeA).